We begin with the raw amino-acid sequence, 73 residues long: MRTLCSLLLICCLLFSYTTPAVGDLKHLILKAQLTRCYKFGGFCHYNICPGNSRFMSNCHPENLRCCKNIKQF.

An N-terminal signal peptide occupies residues Met-1–Gly-23. 3 disulfide bridges follow: Cys-37–Cys-66, Cys-44–Cys-59, and Cys-49–Cys-67.

The protein belongs to the beta-defensin family. As to expression, expressed in both adult and neonate brain, and very weakly in kidneys, epididymis, and testis.

It is found in the secreted. Functionally, has antibacterial activity. The polypeptide is Beta-defensin 10 (Defb10) (Mus musculus (Mouse)).